Reading from the N-terminus, the 715-residue chain is Polyribonucleotide nucleotidyltransferase (715 aa).

Mg(2+) contacts are provided by aspartate 488 and aspartate 494. A KH domain is found at proline 555–isoleucine 614. The 69-residue stretch at glycine 624–lysine 692 folds into the S1 motif domain.

The protein belongs to the polyribonucleotide nucleotidyltransferase family. Mg(2+) serves as cofactor.

It is found in the cytoplasm. It carries out the reaction RNA(n+1) + phosphate = RNA(n) + a ribonucleoside 5'-diphosphate. Functionally, involved in mRNA degradation. Catalyzes the phosphorolysis of single-stranded polyribonucleotides processively in the 3'- to 5'-direction. This Chelativorans sp. (strain BNC1) protein is Polyribonucleotide nucleotidyltransferase.